A 369-amino-acid chain; its full sequence is tRNA 2-selenouridine synthase (369 aa).

Residues 15-138 (FIAGQPLIDL…MRQYLIGVIE (124 aa)) form the Rhodanese domain. Catalysis depends on C98, which acts as the S-selanylcysteine intermediate.

This sequence belongs to the SelU family. In terms of assembly, monomer.

The enzyme catalyses 5-methylaminomethyl-2-thiouridine(34) in tRNA + selenophosphate + (2E)-geranyl diphosphate + H2O + H(+) = 5-methylaminomethyl-2-selenouridine(34) in tRNA + (2E)-thiogeraniol + phosphate + diphosphate. It carries out the reaction 5-methylaminomethyl-2-thiouridine(34) in tRNA + (2E)-geranyl diphosphate = 5-methylaminomethyl-S-(2E)-geranyl-thiouridine(34) in tRNA + diphosphate. It catalyses the reaction 5-methylaminomethyl-S-(2E)-geranyl-thiouridine(34) in tRNA + selenophosphate + H(+) = 5-methylaminomethyl-2-(Se-phospho)selenouridine(34) in tRNA + (2E)-thiogeraniol. The catalysed reaction is 5-methylaminomethyl-2-(Se-phospho)selenouridine(34) in tRNA + H2O = 5-methylaminomethyl-2-selenouridine(34) in tRNA + phosphate. Functionally, involved in the post-transcriptional modification of the uridine at the wobble position (U34) of tRNA(Lys), tRNA(Glu) and tRNA(Gln). Catalyzes the conversion of 2-thiouridine (S2U-RNA) to 2-selenouridine (Se2U-RNA). Acts in a two-step process involving geranylation of 2-thiouridine (S2U) to S-geranyl-2-thiouridine (geS2U) and subsequent selenation of the latter derivative to 2-selenouridine (Se2U) in the tRNA chain. The chain is tRNA 2-selenouridine synthase from Shewanella sp. (strain MR-7).